Here is a 267-residue protein sequence, read N- to C-terminus: Fibroin light chain (267 aa).

An N-terminal signal peptide occupies residues 1–16; sequence MLPFVLVLLVATSALA. Position 19 is an N-acetylserine; in short form (serine 19). Cysteine 103 and cysteine 162 are oxidised to a cystine.

Silk fibroin elementary unit consists in a disulfide-linked heavy and light chain and a p25 glycoprotein in molar ratios of 6:6:1. This results in a complex of approximately 2.3 MDa. In terms of processing, partially N-terminally processed to yield a short form which lacks the first two residues of the long form. The interchain disulfide bridge is essential for the intracellular transport and secretion of fibroin. In terms of tissue distribution, produced exclusively in the posterior (PSG) section of silk glands, which are essentially modified salivary glands.

Its subcellular location is the secreted. Functionally, it is likely that the major role of L-chain is to prevent the retention of H-chain in ER by forming the disulfide linkage. The chain is Fibroin light chain (FIBL) from Galleria mellonella (Greater wax moth).